We begin with the raw amino-acid sequence, 387 residues long: Methyltransferase phomM' (387 aa).

Residues 98–223 (PHRPKDLHIL…QSVADLFTTL (126 aa)) form a methyltransferase domain region.

It belongs to the class I-like SAM-binding methyltransferase superfamily. Erg6/SMT family.

The protein operates within mycotoxin biosynthesis. Its function is as follows. Methyltransferase; part of the gene cluster that mediates the biosynthesis of the phomopsins, a group of hexapeptide mycotoxins which infects lupins and causes lupinosis disease in livestock. Within the pathway, phomM' acts as an S-adenosylmethionine-dependent alpha-N-methyltransferase that catalyzes two successive N-methylation reactions, converting N-desmethyl-phomopsin A to phomopsin A and phomopsin A further to an N,N-dimethylated congener called phomopsin E. The pathway starts with the processing of the precursor phomA' by several endopeptidases including kexin proteases as well as the cluster-specific S41 family peptidase phomP1 and the oligopeptidase phomG' to produce 10 identical copies of the hexapeptide Tyr-Val-Ile-Pro-Ile-Asp. After being excised from the precursor peptide, the core peptides are cyclized and modified post-translationally by enzymes encoded within the gene cluster. The timing and order of proteolysis of the phomA' precursor and PTMs are still unknown. Two tyrosinase-like enzymes, phomQ1' and phomQ2, catalyze the chlorination and hydroxylation of Tyr, respectively. PhomYb, is proposed to be involved in the construction of the macrocyclic structure. The other 4 ustYa family proteins may be involved in PTMs that generate the unique structure of phomopsin A. PhomYa' is required for the hydroxylation of C-beta of Tyr. PhomYc', phomYd', and phomYe are responsible for the biosynthesis of 2,3-dehydroisoleucine (dIle), 2,3-dehydroaspartic acid (dAsp), and 3,4-dehydroproline (dPro), respectively. While dIle formation by phomYc' is indispensable for the installation of dAsp by phomYd', the order of the other PTMs have not been elucidated yet. Most of the biosynthetic enzymes likely have broad substrate specificity, and thus, there might be a metabolic grid from a precursor to phomopsin A. The enzyme(s) responsible for the biosynthesis of 3,4-dehydrovaline (dVal) have also not been identified yet. Finally, phomM' acts as an S-adenosylmethionine-dependent alpha-N-methyltransferase that catalyzes two successive N-methylation reactions, converting N-desmethyl-phomopsin A to phomopsin A and phomopsin A further to an N,N-dimethylated congener called phomopsin E. This chain is Methyltransferase phomM', found in Diaporthe leptostromiformis (Lupinosis disease fungus).